We begin with the raw amino-acid sequence, 54 residues long: U7-myrmicitoxin-Tb1a (54 aa).

Positions 1–26 (MQLSHLLLAFAMIFVMTIIHTPQVQA) are cleaved as a signal peptide. A propeptide spanning residues 27 to 36 (DAMADADADA) is cleaved from the precursor. Cysteines 40 and 49 form a disulfide.

Expressed by the venom gland.

The protein resides in the secreted. Venom protein with unknown function. Does not induce paralysis when a high dose is administered by intrathoracic injection into the blowfly Lucilia caesar. This is U7-myrmicitoxin-Tb1a from Tetramorium bicarinatum (Tramp ant).